The primary structure comprises 83 residues: MSGPNGDLGMPVEAGAEGEEDGFGEAEYAAINSMLDQINSCLDHLEEKNDHLHARLQELLESNRQTRLEFQQQLGEAPSDASP.

The interval 1 to 24 is disordered; sequence MSGPNGDLGMPVEAGAEGEEDGFG. A coiled-coil region spans residues 25 to 74; it reads EAEYAAINSMLDQINSCLDHLEEKNDHLHARLQELLESNRQTRLEFQQQL. S82 bears the Phosphoserine mark.

The protein belongs to the UPF0184 (EST00098) family.

It localises to the cell junction. The protein resides in the cytoplasm. It is found in the cytoskeleton. Functionally, essential for intermediate filament organization in intestinal cells, interacts with intermediate filament and regulates intestinal lumen morphology. The polypeptide is Bublin coiled-coil protein (Homo sapiens (Human)).